We begin with the raw amino-acid sequence, 511 residues long: 60 kDa neurofilament protein (511 aa).

Residues 1-32 (MSVTQKKTEISTTTTYEGESRPSSGMSGFSYS) are disordered. A head region spans residues 1–99 (MSVTQKKTEI…KANREREKQD (99 aa)). The segment covering 21 to 30 (RPSSGMSGFS) has biased composition (polar residues). The IF rod domain occupies 96-449 (EKQDMRDLNE…KLLEGEESRV (354 aa)). Positions 100-135 (MRDLNERFANYIEKVRFLEAQNKKLAGELEELKSKW) are coil 1A. Positions 136–145 (GKETSAIKEM) are linker 1. A coil 1B region spans residues 146 to 284 (YETELEEARK…VHAQELKELA (139 aa)). The interval 285 to 303 (ALAYRDTTAENREFWRNEL) is linker 12. Positions 304 to 449 (AQAIRDIQQE…KLLEGEESRV (146 aa)) are coil 2. Residues 450 to 511 (GMKQIVEQVV…EEKKSMGSSD (62 aa)) are tail. The segment at 479-511 (GYEATGGITTTTTTSSQERRSMSEEKKSMGSSD) is disordered. Residues 483 to 492 (TGGITTTTTT) show a composition bias toward low complexity. Basic and acidic residues predominate over residues 495-511 (QERRSMSEEKKSMGSSD).

It belongs to the intermediate filament family.

Functionally, major squid neurofilament protein. In Doryteuthis pealeii (Longfin inshore squid), this protein is 60 kDa neurofilament protein.